The following is a 333-amino-acid chain: N-acetyl-gamma-glutamyl-phosphate reductase (333 aa).

Residue Cys136 is part of the active site.

The protein belongs to the NAGSA dehydrogenase family. Type 1 subfamily.

The protein localises to the cytoplasm. It carries out the reaction N-acetyl-L-glutamate 5-semialdehyde + phosphate + NADP(+) = N-acetyl-L-glutamyl 5-phosphate + NADPH + H(+). It participates in amino-acid biosynthesis; L-arginine biosynthesis; N(2)-acetyl-L-ornithine from L-glutamate: step 3/4. Catalyzes the NADPH-dependent reduction of N-acetyl-5-glutamyl phosphate to yield N-acetyl-L-glutamate 5-semialdehyde. The sequence is that of N-acetyl-gamma-glutamyl-phosphate reductase from Xylella fastidiosa (strain 9a5c).